We begin with the raw amino-acid sequence, 484 residues long: Ectonucleoside triphosphate diphosphohydrolase 6 (484 aa).

Residues Met1–Arg39 lie on the Cytoplasmic side of the membrane. A helical; Signal-anchor for type II membrane protein membrane pass occupies residues Val40–Ile60. At Lys61–Ser484 the chain is on the lumenal side. A glycan (N-linked (GlcNAc...) asparagine) is linked at Asn220. Glu224 (proton acceptor) is an active-site residue. N-linked (GlcNAc...) asparagine glycosylation is present at Asn284. 2 disulfides stabilise this stretch: Cys325–Cys356 and Cys416–Cys430.

It belongs to the GDA1/CD39 NTPase family. As to quaternary structure, monomer. Requires Ca(2+) as cofactor. It depends on Mg(2+) as a cofactor. In terms of processing, the secreted form may be produced by intracellular processing. N-glycosylated. In terms of tissue distribution, expressed in most tissues, but predominantly in heart.

It is found in the golgi apparatus membrane. Its subcellular location is the secreted. The protein localises to the cell membrane. It catalyses the reaction a ribonucleoside 5'-diphosphate + H2O = a ribonucleoside 5'-phosphate + phosphate + H(+). It carries out the reaction IDP + H2O = IMP + phosphate + H(+). The enzyme catalyses GDP + H2O = GMP + phosphate + H(+). The catalysed reaction is UDP + H2O = UMP + phosphate + H(+). Glycosylation does not appear to be required for enzymatic activity. In terms of biological role, catalyzes the hydrolysis of nucleoside triphosphates and diphosphates in a calcium- or magnesium-dependent manner. Has a strong preference for nucleoside diphosphates, preferentially hydrolyzes GDP, IDP, and UDP, with slower hydrolysis of CDP, ITP, GTP, CTP, ADP, and UTP and virtually no hydrolysis of ATP. The membrane bound form might support glycosylation reactions in the Golgi apparatus and, when released from cells, might catalyze the hydrolysis of extracellular nucleotides. In Homo sapiens (Human), this protein is Ectonucleoside triphosphate diphosphohydrolase 6 (ENTPD6).